Reading from the N-terminus, the 732-residue chain is Ets DNA-binding protein pokkuri (732 aa).

The PNT domain occupies 33 to 117; the sequence is SSQLAELKTQ…NVLQMLIIES (85 aa). Positions 133–295 are disordered; that stretch reads SRYPLSPHSH…PPGTPILKDI (163 aa). Residues 141-157 show a composition bias toward pro residues; sequence SHPPTPTWPPLNAPPEN. Residues 176-193 are compositionally biased toward polar residues; it reads NSVTLSPPPSVDSQASSP. Residues 205–240 show a composition bias toward low complexity; it reads GAAPGSAGGSAPAAGGATNTSNPTSSSASSTGSNGS. The segment at residues 396-479 is a DNA-binding region (ETS); that stretch reads RLLWDFLQQL…QGERHCYQFL (84 aa). Disordered regions lie at residues 496 to 548, 590 to 647, and 674 to 732; these read QSTP…NGPM, GPPP…TATS, and VAAS…HMQQ. Positions 506 to 539 are enriched in low complexity; sequence SPSMPQGSSQAPGSPAGQNWNPQQQSQQQQQSPQ. S543 carries the phosphoserine modification. Polar residues predominate over residues 637-647; it reads LSVSSKSTATS. 3 positions are modified to phosphoserine: S677, S682, and S696. Positions 690–709 are enriched in polar residues; that stretch reads AGASNASSSPRPMDQASEQA.

Belongs to the ETS family. Phosphorylated in response to MAPK signaling. May be phosphorylated by rl. In terms of tissue distribution, expressed in R7 and cone cells of the eye.

The protein resides in the nucleus. In terms of biological role, ets-related protein that functions as a negative regulator of photoreceptor development acting antagonistically to pnt and the proneural signal mediated by RAS. It acts upstream of SINA to inhibit R7 development. The polypeptide is Ets DNA-binding protein pokkuri (aop) (Drosophila melanogaster (Fruit fly)).